The primary structure comprises 317 residues: SWI/SNF-related matrix-associated actin-dependent regulator of chromatin subfamily E member 1-related (317 aa).

The span at 1–22 (MSHGPKQPGAASAPASGKAPGQ) shows a compositional bias: low complexity. A disordered region spans residues 1 to 71 (MSHGPKQPGA…RKKILPNGPK (71 aa)). Residue K31 forms a Glycyl lysine isopeptide (Lys-Gly) (interchain with G-Cter in SUMO2) linkage. Residues 31 to 52 (KQERGEGPRAGEKGSHEEEPVK) are compositionally biased toward basic and acidic residues. Residues 53 to 65 (KRGWPKGKKRKKI) show a composition bias toward basic residues. The segment at residues 70-138 (PKAPVTGYVR…QYMKELRAYQ (69 aa)) is a DNA-binding region (HMG box). S160 carries the phosphoserine modification. The stretch at 190 to 257 (EEFLDQNKAR…LQQQLQAVRQ (68 aa)) forms a coiled coil.

Component of a BHC histone deacetylase complex that contains HDAC1, HDAC2, HMG20B/BRAF35, KDM1A, RCOR1/CoREST and PHF21A/BHC80. The BHC complex may also contain ZMYM2, ZNF217, ZMYM3, GSE1 and GTF2I. Interacts with the BRCA2 tumor suppressor protein.

Its subcellular location is the nucleus. It is found in the chromosome. In terms of biological role, required for correct progression through G2 phase of the cell cycle and entry into mitosis. Required for RCOR1/CoREST mediated repression of neuronal specific gene promoters. The protein is SWI/SNF-related matrix-associated actin-dependent regulator of chromatin subfamily E member 1-related (HMG20B) of Bos taurus (Bovine).